Here is a 353-residue protein sequence, read N- to C-terminus: Peptide methionine sulfoxide reductase MsrA/MsrB (353 aa).

The tract at residues 43–196 (REIYLAGGCF…PNGYCHIDIT (154 aa)) is peptide methionine sulfoxide reductase A. Residue Cys51 is part of the active site. The MsrB domain maps to 213–336 (DAELKAKLTP…NSASIKFIPL (124 aa)). Residue Cys325 is the Nucleophile of the active site.

In the N-terminal section; belongs to the MsrA Met sulfoxide reductase family. The protein in the C-terminal section; belongs to the MsrB Met sulfoxide reductase family.

It catalyses the reaction L-methionyl-[protein] + [thioredoxin]-disulfide + H2O = L-methionyl-(S)-S-oxide-[protein] + [thioredoxin]-dithiol. The enzyme catalyses [thioredoxin]-disulfide + L-methionine + H2O = L-methionine (S)-S-oxide + [thioredoxin]-dithiol. It carries out the reaction L-methionyl-[protein] + [thioredoxin]-disulfide + H2O = L-methionyl-(R)-S-oxide-[protein] + [thioredoxin]-dithiol. Has an important function as a repair enzyme for proteins that have been inactivated by oxidation. Catalyzes the reversible oxidation-reduction of methionine sulfoxide in proteins to methionine. This chain is Peptide methionine sulfoxide reductase MsrA/MsrB (msrAB), found in Haemophilus influenzae (strain ATCC 51907 / DSM 11121 / KW20 / Rd).